Reading from the N-terminus, the 197-residue chain is Ribonuclease HII (197 aa).

The region spanning 14 to 197 (EKIVGIDEAG…RSFNLGVNDD (184 aa)) is the RNase H type-2 domain. Positions 20, 21, and 112 each coordinate a divalent metal cation.

It belongs to the RNase HII family. Mn(2+) is required as a cofactor. Mg(2+) serves as cofactor.

It is found in the cytoplasm. It carries out the reaction Endonucleolytic cleavage to 5'-phosphomonoester.. Endonuclease that specifically degrades the RNA of RNA-DNA hybrids. The protein is Ribonuclease HII of Sulfurihydrogenibium sp. (strain YO3AOP1).